The primary structure comprises 180 residues: Large ribosomal subunit protein bL19 (180 aa).

Belongs to the bacterial ribosomal protein bL19 family.

In terms of biological role, this protein is located at the 30S-50S ribosomal subunit interface and may play a role in the structure and function of the aminoacyl-tRNA binding site. The chain is Large ribosomal subunit protein bL19 from Allorhizobium ampelinum (strain ATCC BAA-846 / DSM 112012 / S4) (Agrobacterium vitis (strain S4)).